We begin with the raw amino-acid sequence, 473 residues long: ATP synthase subunit beta (473 aa).

153-160 is a binding site for ATP; sequence GGAGVGKT.

This sequence belongs to the ATPase alpha/beta chains family. As to quaternary structure, F-type ATPases have 2 components, CF(1) - the catalytic core - and CF(0) - the membrane proton channel. CF(1) has five subunits: alpha(3), beta(3), gamma(1), delta(1), epsilon(1). CF(0) has three main subunits: a(1), b(2) and c(9-12). The alpha and beta chains form an alternating ring which encloses part of the gamma chain. CF(1) is attached to CF(0) by a central stalk formed by the gamma and epsilon chains, while a peripheral stalk is formed by the delta and b chains.

The protein localises to the cell inner membrane. It catalyses the reaction ATP + H2O + 4 H(+)(in) = ADP + phosphate + 5 H(+)(out). Produces ATP from ADP in the presence of a proton gradient across the membrane. The catalytic sites are hosted primarily by the beta subunits. The protein is ATP synthase subunit beta of Rickettsia conorii (strain ATCC VR-613 / Malish 7).